The chain runs to 117 residues: Protein SMALL AUXIN UP-REGULATED RNA 54 (117 aa).

Belongs to the ARG7 family. As to expression, expressed in trichomes. Hardly observed in leaves.

The protein localises to the cell membrane. Provide a mechanistic link between auxin and plasma membrane H(+)-ATPases (PM H(+)-ATPases, e.g. AHA1 and AHA2), and triggers PM H(+)-ATPases activity by promoting phosphorylation of their C-terminal autoinhibitory domain as a result of PP2C-D subfamily of type 2C phosphatases inhibition, thus leading to the acidification of the apoplast and the facilitation of solutes and water uptake to drive cell expansion. Triggers plant growth probably by promoting cell elongation. Regulates branch angles and bending. The protein is Protein SMALL AUXIN UP-REGULATED RNA 54 of Arabidopsis thaliana (Mouse-ear cress).